Reading from the N-terminus, the 300-residue chain is tRNA pseudouridine synthase B (300 aa).

The active-site Nucleophile is aspartate 38.

The protein belongs to the pseudouridine synthase TruB family. Type 1 subfamily.

The enzyme catalyses uridine(55) in tRNA = pseudouridine(55) in tRNA. Responsible for synthesis of pseudouridine from uracil-55 in the psi GC loop of transfer RNAs. The chain is tRNA pseudouridine synthase B from Dehalococcoides mccartyi (strain CBDB1).